Reading from the N-terminus, the 278-residue chain is Outer spore wall protein 1 (278 aa).

It is found in the spore wall. Functionally, may be involved in a late step of spore wall assembly. In Saccharomyces cerevisiae (strain ATCC 204508 / S288c) (Baker's yeast), this protein is Outer spore wall protein 1 (OSW1).